Reading from the N-terminus, the 625-residue chain is Chaperone protein HtpG (625 aa).

Residues 1–339 (MNKQTLSFQA…SSDLPLNVSR (339 aa)) form an a; substrate-binding region. The b stretch occupies residues 340–557 (ELLQESRDVK…DGDISGHLAR (218 aa)). The tract at residues 558–625 (LLKQAGQSAP…YVQRVNRLLV (68 aa)) is c.

This sequence belongs to the heat shock protein 90 family. In terms of assembly, homodimer.

It localises to the cytoplasm. Its function is as follows. Molecular chaperone. Has ATPase activity. This Methylibium petroleiphilum (strain ATCC BAA-1232 / LMG 22953 / PM1) protein is Chaperone protein HtpG.